The chain runs to 370 residues: Dual-specificity RNA methyltransferase RlmN (370 aa).

Glu-93 acts as the Proton acceptor in catalysis. One can recognise a Radical SAM core domain in the interval 99 to 337 (EEGRGTLCVS…VTTVRKTRGD (239 aa)). A disulfide bridge links Cys-106 with Cys-343. The [4Fe-4S] cluster site is built by Cys-113, Cys-117, and Cys-120. Residues 167 to 168 (GE), Ser-199, 221 to 223 (SLH), and Asn-300 contribute to the S-adenosyl-L-methionine site. Cys-343 serves as the catalytic S-methylcysteine intermediate.

The protein belongs to the radical SAM superfamily. RlmN family. The cofactor is [4Fe-4S] cluster.

It localises to the cytoplasm. The enzyme catalyses adenosine(2503) in 23S rRNA + 2 reduced [2Fe-2S]-[ferredoxin] + 2 S-adenosyl-L-methionine = 2-methyladenosine(2503) in 23S rRNA + 5'-deoxyadenosine + L-methionine + 2 oxidized [2Fe-2S]-[ferredoxin] + S-adenosyl-L-homocysteine. It carries out the reaction adenosine(37) in tRNA + 2 reduced [2Fe-2S]-[ferredoxin] + 2 S-adenosyl-L-methionine = 2-methyladenosine(37) in tRNA + 5'-deoxyadenosine + L-methionine + 2 oxidized [2Fe-2S]-[ferredoxin] + S-adenosyl-L-homocysteine. Functionally, specifically methylates position 2 of adenine 2503 in 23S rRNA and position 2 of adenine 37 in tRNAs. m2A2503 modification seems to play a crucial role in the proofreading step occurring at the peptidyl transferase center and thus would serve to optimize ribosomal fidelity. This chain is Dual-specificity RNA methyltransferase RlmN, found in Francisella tularensis subsp. tularensis (strain WY96-3418).